The following is a 265-amino-acid chain: Hydroxyethylthiazole kinase (265 aa).

A substrate-binding site is contributed by M43. Positions 118 and 165 each coordinate ATP. Position 192 (G192) interacts with substrate.

It belongs to the Thz kinase family. Mg(2+) is required as a cofactor.

It catalyses the reaction 5-(2-hydroxyethyl)-4-methylthiazole + ATP = 4-methyl-5-(2-phosphooxyethyl)-thiazole + ADP + H(+). The protein operates within cofactor biosynthesis; thiamine diphosphate biosynthesis; 4-methyl-5-(2-phosphoethyl)-thiazole from 5-(2-hydroxyethyl)-4-methylthiazole: step 1/1. Functionally, catalyzes the phosphorylation of the hydroxyl group of 4-methyl-5-beta-hydroxyethylthiazole (THZ). This chain is Hydroxyethylthiazole kinase, found in Pyrococcus horikoshii (strain ATCC 700860 / DSM 12428 / JCM 9974 / NBRC 100139 / OT-3).